We begin with the raw amino-acid sequence, 296 residues long: Prostate androgen-regulated mucin-like protein 1 homolog (296 aa).

Residues 1 to 20 (MVCKALITLCIFAAGLRVQG) form the signal peptide. The Extracellular portion of the chain corresponds to 21-244 (SPTPTLLPVS…EVENALSSGS (224 aa)). N-linked (GlcNAc...) asparagine glycans are attached at residues Asn62, Asn96, and Asn108. The segment at 73 to 220 (LTSQLPTHPR…SPQDTEPGKV (148 aa)) is disordered. Residues 80-96 (HPREEAVTSPPLKREVN) show a composition bias toward basic and acidic residues. Over residues 97–111 (STDSSPTGFSSNSSG) the composition is skewed to low complexity. Over residues 125 to 145 (SPETSVPATGSQSPTLLFSQG) the composition is skewed to polar residues. 2 stretches are compositionally biased toward low complexity: residues 146–175 (PTSA…TVNN) and 195–205 (SHTPTSHVTEP). N-linked (GlcNAc...) asparagine glycosylation is present at Asn168. The span at 206 to 217 (VPKEKSPQDTEP) shows a compositional bias: basic and acidic residues. The chain crosses the membrane as a helical span at residues 245-265 (IAAITVTVIAVVLLVFGAAAY). Residues 266–296 (LKIRHSSYGRLLDDHDYGSWGNYNNPLYDDS) are Cytoplasmic-facing. Ser284 bears the Phosphoserine mark.

It belongs to the PARM family. Highly N-glycosylated and O-glycosylated. Expressed in prostate. Detected in other organs at low levels, these include the heart and various tissues of the urogenital tract. Not detected in mammary gland.

The protein localises to the cell membrane. It is found in the golgi apparatus membrane. Its subcellular location is the endosome membrane. Its function is as follows. May regulate TLP1 expression and telomerase activity, thus enabling certain prostatic cells to resist apoptosis. The protein is Prostate androgen-regulated mucin-like protein 1 homolog (Parm1) of Rattus norvegicus (Rat).